The following is a 121-amino-acid chain: Large ribosomal subunit protein bL20 (121 aa).

It belongs to the bacterial ribosomal protein bL20 family.

In terms of biological role, binds directly to 23S ribosomal RNA and is necessary for the in vitro assembly process of the 50S ribosomal subunit. It is not involved in the protein synthesizing functions of that subunit. This is Large ribosomal subunit protein bL20 from Wolbachia sp. subsp. Brugia malayi (strain TRS).